The chain runs to 335 residues: Anthranilate phosphoribosyltransferase 2 (335 aa).

5-phospho-alpha-D-ribose 1-diphosphate contacts are provided by residues G70, 73 to 74 (GD), T78, 80 to 83 (NIST), 98 to 106 (KHGNRSASS), and S110. Residue G70 coordinates anthranilate. S82 provides a ligand contact to Mg(2+). Anthranilate is bound at residue N101. Anthranilate is bound at residue R156. 2 residues coordinate Mg(2+): D215 and E216.

Belongs to the anthranilate phosphoribosyltransferase family. Homodimer. Mg(2+) serves as cofactor.

It carries out the reaction N-(5-phospho-beta-D-ribosyl)anthranilate + diphosphate = 5-phospho-alpha-D-ribose 1-diphosphate + anthranilate. Its pathway is amino-acid biosynthesis; L-tryptophan biosynthesis; L-tryptophan from chorismate: step 2/5. Catalyzes the transfer of the phosphoribosyl group of 5-phosphorylribose-1-pyrophosphate (PRPP) to anthranilate to yield N-(5'-phosphoribosyl)-anthranilate (PRA). This chain is Anthranilate phosphoribosyltransferase 2, found in Streptomyces coelicolor (strain ATCC BAA-471 / A3(2) / M145).